The primary structure comprises 21 residues: Major outer membrane protein (21 aa).

Disulfide bond interactions within and between MOMP molecules and other components form high molecular-weight oligomers.

It is found in the cell outer membrane. Its function is as follows. Structural rigidity of the outer membrane of elementary bodies and porin forming, permitting diffusion of solutes through the intracellular reticulate body membrane. In Actinobacillus equuli, this protein is Major outer membrane protein.